The primary structure comprises 421 residues: Serine hydroxymethyltransferase (421 aa).

Residues leucine 121 and glycine 125–leucine 127 each bind (6S)-5,6,7,8-tetrahydrofolate. Lysine 230 carries the N6-(pyridoxal phosphate)lysine modification. A (6S)-5,6,7,8-tetrahydrofolate-binding site is contributed by serine 355–phenylalanine 357.

The protein belongs to the SHMT family. Homodimer. The cofactor is pyridoxal 5'-phosphate.

It is found in the cytoplasm. The catalysed reaction is (6R)-5,10-methylene-5,6,7,8-tetrahydrofolate + glycine + H2O = (6S)-5,6,7,8-tetrahydrofolate + L-serine. It functions in the pathway one-carbon metabolism; tetrahydrofolate interconversion. Its pathway is amino-acid biosynthesis; glycine biosynthesis; glycine from L-serine: step 1/1. Its function is as follows. Catalyzes the reversible interconversion of serine and glycine with tetrahydrofolate (THF) serving as the one-carbon carrier. This reaction serves as the major source of one-carbon groups required for the biosynthesis of purines, thymidylate, methionine, and other important biomolecules. Also exhibits THF-independent aldolase activity toward beta-hydroxyamino acids, producing glycine and aldehydes, via a retro-aldol mechanism. The sequence is that of Serine hydroxymethyltransferase from Psychromonas ingrahamii (strain DSM 17664 / CCUG 51855 / 37).